A 988-amino-acid chain; its full sequence is Voltage-gated delayed rectifier potassium channel KCNH5 (988 aa).

The Cytoplasmic portion of the chain corresponds to 1-217 (MPGGKRGLVA…LHYCAFKTTW (217 aa)). A PAS domain is found at 12–90 (QNTFLENIVR…VRQTFDNYES (79 aa)). The 53-residue stretch at 91-143 (NCFEVLLYKKNRTPVWFYMQIAPIRNEHEKVVLFLCTFKDITLFKQPIEDDST) folds into the PAC domain. Residues 218-238 (DWVILILTFYTAIMVPYNVSF) form a helical membrane-spanning segment. The Extracellular portion of the chain corresponds to 239-243 (KTKQN). The helical transmembrane segment at 244–264 (NIAWLVLDSVVDVIFLVDIVL) threads the bilayer. The Cytoplasmic segment spans residues 265–291 (NFHTTFVGPGGEVISDPKLIRMNYLKT). The helical transmembrane segment at 292-312 (WFVIDLLSCLPYDIINAFENV) threads the bilayer. The Extracellular portion of the chain corresponds to 313–319 (DEGISSL). Residues 320–340 (FSSLKVVRLLRLGRVARKLDH) traverse the membrane as a helical; Voltage-sensor segment. Residues 341-346 (YLEYGA) lie on the Cytoplasmic side of the membrane. The chain crosses the membrane as a helical span at residues 347–367 (AVLVLLVCVFGLVAHWLACIW). The Extracellular segment spans residues 368 to 419 (YSIGDYEVIDEVTNTIQIDSWLYQLALSIGTPYRYNTSAGIWEGGPSKDSLY). N-linked (GlcNAc...) asparagine glycosylation is present at asparagine 403. An intramembrane region (pore-forming) is located at residues 420–440 (VSSLYFTMTSLTTIGFGNIAP). The short motif at 432 to 437 (TIGFGN) is the Selectivity filter element. At 441–446 (TTDVEK) the chain is on the extracellular side. The helical transmembrane segment at 447–467 (MFSVAMMMVGSLLYATIFGNV) threads the bilayer. Residues 468-988 (TTIFQQMYAN…PESDKDEIHF (521 aa)) are Cytoplasmic-facing. 550–667 (AFRLASDGCL…NSFSRNLTLT (118 aa)) is a binding site for a nucleoside 3',5'-cyclic phosphate. The segment at 704-715 (HPVRKLFQKFKQ) is calmodulin-binding. The disordered stretch occupies residues 717 to 742 (KELRNQGSTQGDPERNQLQVESRSLQ). Positions 721–742 (NQGSTQGDPERNQLQVESRSLQ) are enriched in polar residues. A Glycyl lysine isopeptide (Lys-Gly) (interchain with G-Cter in ubiquitin) cross-link involves residue lysine 785. A disordered region spans residues 838 to 890 (GLLSEDPKSSDSENSVTKNPLRKTDSCDSGITKSDLRLDKAGEARSPLEHSPI). Basic and acidic residues predominate over residues 871–885 (SDLRLDKAGEARSPL). Position 883 is a phosphoserine (serine 883). Residues 909 to 948 (TLQEVKHELKEDIQLLSCRMTALEKQVAEILKILSEKSVP) are CAD (involved in subunit assembly). Positions 969–988 (DIFSVSRPESPESDKDEIHF) are disordered. The span at 977 to 988 (ESPESDKDEIHF) shows a compositional bias: basic and acidic residues.

This sequence belongs to the potassium channel family. H (Eag) (TC 1.A.1.20) subfamily. Kv10.2/KCNH5 sub-subfamily. Homotetramer. The potassium channel is probably composed of a homo- or heterotetrameric complex of pore-forming alpha subunits that can associate with modulating beta subunits. Heteromultimer with KCNH1/EAG. Detected in brain, skeletal muscle, heart, placenta, lung and liver, and at low levels in kidney.

The protein localises to the membrane. It carries out the reaction K(+)(in) = K(+)(out). Pore-forming (alpha) subunit of a voltage-gated delayed rectifier potassium channel that mediates outward-rectifying potassium currents which, on depolarization, reaches a steady-state level and do not inactivate. The kinetic is characterized by a slow activation time course and a small voltage dependence of the activation time constants, therefore, starts to open at more negative voltages. The activation kinetics depend on the prepulse potential and external divalent cation concentration. The time course of activation is biphasic with a fast and a slowly activating current component. With negative prepulses, the current activation is delayed and slowed down several fold, whereas more positive prepulses speed up activation, therefore the activation rate depends on holding potential. This Homo sapiens (Human) protein is Voltage-gated delayed rectifier potassium channel KCNH5.